Here is a 76-residue protein sequence, read N- to C-terminus: ATP synthase subunit 9, mitochondrial (76 aa).

Methionine 1 is modified (N-formylmethionine). 2 helical membrane passes run 14–34 and 52–72; these read LASI…AALI and ILGF…AFLL.

In terms of assembly, F-type ATP synthases have 2 components, the catalytic core F(1) and the membrane-embedded component F(0), linked together by a central stalk and a peripheral stalk. The central stalk, also called rotor shaft, is often seen as part of F(1). The peripheral stalk is seen as part of F(0). F(0) contains the membrane channel next to the rotor. F-type ATP synthases form dimers but each monomer functions independently in ATP generation. The dimer consists of 17 different polypeptides: ATP1 (subunit alpha, 3 molecules per monomer, part of F(1)), ATP2 (subunit beta, 3 copies per monomer, part of F(1)), ATP3 (subunit gamma, part of the central stalk), ATP4 (subunit b, part of the peripheral stalk), ATP5/OSCP (subunit 5/OSCP, part of the peripheral stalk), ATP6 (subunit a, part of the peripheral stalk), ATP7 (subunit d, part of the peripheral stalk), ATP8 (subunit 8, part of the peripheral stalk), OLI1 (subunit c, part of the rotor, 10 molecules per monomer), ATP14 (subunit h, part of the peripheral stalk), ATP15 (subunit epsilon, part of the central stalk), ATP16 (subunit delta, part of the central stalk), ATP17 (subunit f, part of the peripheral stalk), ATP18 (subunit i/j, part of the peripheral stalk), ATP19 (subunit k, dimer-specific, at interface between monomers), ATP20 (subunit g, at interface between monomers), TIM11 (subunit e, at interface between monomers).

Its subcellular location is the mitochondrion inner membrane. Its function is as follows. Mitochondrial membrane ATP synthase (F(1)F(0) ATP synthase or Complex V) produces ATP from ADP in the presence of a proton gradient across the membrane which is generated by electron transport complexes of the respiratory chain. F-type ATP synthases consist of two structural domains, F(1) - containing the extramembraneous catalytic core, and F(0) - containing the membrane proton channel, linked together by a central stalk and a peripheral stalk. During catalysis, ATP synthesis in the catalytic domain of F(1) is coupled via a rotary mechanism of the central stalk subunits to proton translocation. Part of the complex F(0) domain. A homomeric c-ring of 10 OLI1/ATP9 subunits is part of the complex rotary element. The protein is ATP synthase subunit 9, mitochondrial of Yarrowia lipolytica (strain CLIB 122 / E 150) (Yeast).